A 227-amino-acid polypeptide reads, in one-letter code: ATP synthase subunit a (227 aa).

Transmembrane regions (helical) follow at residues Leu14–Phe34, Trp69–Phe89, Gln98–Phe118, Leu137–Leu157, His169–Leu189, and Ile205–Leu223.

Belongs to the ATPase A chain family. As to quaternary structure, F-type ATPases have 2 components, CF(1) - the catalytic core - and CF(0) - the membrane proton channel. CF(1) has five subunits: alpha(3), beta(3), gamma(1), delta(1), epsilon(1). CF(0) has three main subunits: a, b and c.

The protein localises to the mitochondrion inner membrane. Functionally, mitochondrial membrane ATP synthase (F(1)F(0) ATP synthase or Complex V) produces ATP from ADP in the presence of a proton gradient across the membrane which is generated by electron transport complexes of the respiratory chain. F-type ATPases consist of two structural domains, F(1) - containing the extramembraneous catalytic core and F(0) - containing the membrane proton channel, linked together by a central stalk and a peripheral stalk. During catalysis, ATP synthesis in the catalytic domain of F(1) is coupled via a rotary mechanism of the central stalk subunits to proton translocation. Key component of the proton channel; it may play a direct role in the translocation of protons across the membrane. The polypeptide is ATP synthase subunit a (ATP6) (Branchiostoma floridae (Florida lancelet)).